The sequence spans 661 residues: Immunoglobulin-like domain-containing receptor 2 (661 aa).

Positions 1-35 (MPAFPTLDLDGKLGKMDRVVLGWTAVFWLTAMVEG) are cleaved as a signal peptide. The Ig-like V-type domain maps to 36-177 (LQVTVPDKKK…LEGKNEDSVE (142 aa)). At 36–201 (LQVTVPDKKK…PSFAVEIMPE (166 aa)) the chain is on the lumenal side. Cysteines 57 and 160 form a disulfide. Residues 202–222 (WVFVGLVILGIFLFFVLVGIC) form a helical membrane-spanning segment. Over 223-661 (WCQCCPHSCC…DFPTRMSLVV (439 aa)) the chain is Cytoplasmic. Disordered stretches follow at residues 288–310 (LMDKPHPPPLAPSDSTGGSHSVR), 410–429 (EDRESFRHSQQRSKSEMLSR), and 453–661 (QRSR…SLVV). 2 stretches are compositionally biased toward basic and acidic residues: residues 410-428 (EDRESFRHSQQRSKSEMLS) and 463-478 (HEARAGSRFERSESRA). Serine 487 is modified (phosphoserine). Over residues 491 to 506 (YYGRGRSREPPGDGER) the composition is skewed to basic and acidic residues. Arginine 559 is modified (omega-N-methylarginine). The residue at position 594 (serine 594) is a Phosphoserine. Residues 595–607 (EGEDEDDAADEDA) are compositionally biased toward acidic residues. The segment covering 628-639 (RGRDLSFHSNSE) has biased composition (basic and acidic residues).

This sequence belongs to the immunoglobulin superfamily. LISCH7 family. Interacts with MARVELD2 and OCLN. Interacts with P4HB and HSPA5; the interaction with HSPA5 stabilizes ILDR2 expression. Interacts (via C-terminus) with TRA2A, TRA2B and SRSF1. In terms of tissue distribution, expressed in epithelial tissues, mainly in liver, kidney and colon.

It is found in the endoplasmic reticulum membrane. The protein localises to the cell junction. The protein resides in the tight junction. It localises to the nucleus. May be involved in ER stress pathways with effects on lipid homeostasis and insulin secretion. With ILDR1 and LSR, involved in the maintain of the epithelial barrier function through the recruitment of MARVELD2/tricellulin to tricellular tight junctions. Also functions as a B7-like protein family member expressed on immune cells and inflamed tissue and with T-cell inhibitory activity. In the inner ear, may regulate alternative pre-mRNA splicing via binding to TRA2A, TRA2B and SRSF1. This Mus musculus (Mouse) protein is Immunoglobulin-like domain-containing receptor 2.